The sequence spans 72 residues: Alpha-elapitoxin-Dpp2c (72 aa).

Disulfide bonds link C3/C21, C14/C42, C27/C31, C46/C57, and C58/C63.

This sequence belongs to the three-finger toxin family. Long-chain subfamily. Type II alpha-neurotoxin sub-subfamily. In terms of tissue distribution, expressed by the venom gland.

It localises to the secreted. Its function is as follows. Binds with high affinity to muscular (alpha-1/CHRNA1) and neuronal (alpha-7/CHRNA7) nicotinic acetylcholine receptor (nAChR) and inhibits acetylcholine from binding to the receptor, thereby impairing neuromuscular and neuronal transmission. In Dendroaspis polylepis polylepis (Black mamba), this protein is Alpha-elapitoxin-Dpp2c.